The primary structure comprises 501 residues: Cytochrome P450 71B3 (501 aa).

A helical membrane pass occupies residues 2-22 (SILLYFFFLPVILSLIFMKKF). A heme-binding site is contributed by Cys-445.

It belongs to the cytochrome P450 family. Requires heme as cofactor.

It is found in the membrane. This chain is Cytochrome P450 71B3 (CYP71B3), found in Arabidopsis thaliana (Mouse-ear cress).